Reading from the N-terminus, the 258-residue chain is Chymotrypsin-like elastase family member 1 (258 aa).

An N-terminal signal peptide occupies residues 1–8 (MLVLYGHS). Positions 9-18 (TQDVPETNAR) are cleaved as a propeptide — activation peptide. The 238-residue stretch at 19–256 (VVGGTEARRN…YITWINNVIA (238 aa)) folds into the Peptidase S1 domain. The cysteines at positions 48 and 64 are disulfide-linked. The Charge relay system role is filled by histidine 63. Ca(2+) contacts are provided by glutamate 77, asparagine 79, glutamine 82, and glutamate 87. Residue asparagine 79 is glycosylated (N-linked (GlcNAc...) asparagine). The Charge relay system role is filled by aspartate 111. Cystine bridges form between cysteine 145/cysteine 212, cysteine 176/cysteine 192, and cysteine 202/cysteine 232. The active-site Charge relay system is the serine 206. Asparagine 233 carries N-linked (GlcNAc...) asparagine glycosylation.

It belongs to the peptidase S1 family. Elastase subfamily. Ca(2+) serves as cofactor.

Its subcellular location is the secreted. It catalyses the reaction Hydrolysis of proteins, including elastin. Preferential cleavage: Ala-|-Xaa.. Serine proteases that hydrolyze many proteins in addition to elastin. This chain is Chymotrypsin-like elastase family member 1 (CELA1), found in Canis lupus familiaris (Dog).